Here is a 347-residue protein sequence, read N- to C-terminus: GMP reductase (347 aa).

Residue 108-131 (ADFQKTKDIMALTDDLIFICIDIA) participates in NADP(+) binding. G181 and G183 together coordinate K(+). C186 acts as the Thioimidate intermediate in catalysis. 216–239 (IIGDGGCSCAGDVSKAFGGGADFV) is a binding site for NADP(+).

Belongs to the IMPDH/GMPR family. GuaC type 1 subfamily. Homotetramer.

The enzyme catalyses IMP + NH4(+) + NADP(+) = GMP + NADPH + 2 H(+). Its function is as follows. Catalyzes the irreversible NADPH-dependent deamination of GMP to IMP. It functions in the conversion of nucleobase, nucleoside and nucleotide derivatives of G to A nucleotides, and in maintaining the intracellular balance of A and G nucleotides. This chain is GMP reductase, found in Aliivibrio fischeri (strain MJ11) (Vibrio fischeri).